The primary structure comprises 209 residues: Protein TIC 20-v, chloroplastic (209 aa).

The transit peptide at 1-49 (MAIISQFFAPLPSLTGTLTLTGRSFLPLNLDTQFPKPRLSRDRAATLVL) directs the protein to the chloroplast. Helical transmembrane passes span 63–83 (IISA…GKFI), 103–123 (AFKS…FVVV), 132–152 (VRFN…PDLL), and 173–193 (TVFL…LFGL).

The protein belongs to the Tic20 family. As to quaternary structure, part of the Tic complex. As to expression, expressed in leaves, siliques and roots.

It is found in the plastid. Its subcellular location is the chloroplast inner membrane. Functionally, may be involved in protein precursor import into chloroplasts. Not redundant with TIC20-I, TIC20-II or TIC20-IV. This chain is Protein TIC 20-v, chloroplastic (TIC20-V), found in Arabidopsis thaliana (Mouse-ear cress).